The chain runs to 101 residues: Phosphoribosyl-AMP cyclohydrolase (101 aa).

Residue Asp-71 coordinates Mg(2+). Position 72 (Cys-72) interacts with Zn(2+). Mg(2+) is bound by residues Asp-73 and Asp-75. 2 residues coordinate Zn(2+): Cys-88 and Cys-95.

The protein belongs to the PRA-CH family. In terms of assembly, homodimer. Mg(2+) is required as a cofactor. Requires Zn(2+) as cofactor.

Its subcellular location is the cytoplasm. It catalyses the reaction 1-(5-phospho-beta-D-ribosyl)-5'-AMP + H2O = 1-(5-phospho-beta-D-ribosyl)-5-[(5-phospho-beta-D-ribosylamino)methylideneamino]imidazole-4-carboxamide. The protein operates within amino-acid biosynthesis; L-histidine biosynthesis; L-histidine from 5-phospho-alpha-D-ribose 1-diphosphate: step 3/9. Its function is as follows. Catalyzes the hydrolysis of the adenine ring of phosphoribosyl-AMP. This chain is Phosphoribosyl-AMP cyclohydrolase, found in Bacillus cereus (strain B4264).